The sequence spans 937 residues: Chaperone protein ClpD2, chloroplastic (937 aa).

A chloroplast-targeting transit peptide spans 1–80 (MEACCCSSSS…FERFTERAVK (80 aa)). 2 repeat regions span residues 81–137 (AVVF…VGKE) and 152–217 (FSGA…VQGE). Residues 81–217 (AVVFSQREAR…KQALTRVQGE (137 aa)) enclose the Clp R domain. The tract at residues 259–513 (LALFCLDLTM…RMESFKRKKE (255 aa)) is i. ATP contacts are provided by residues 304 to 311 (GEAGVGKT) and 658 to 665 (GPTGVGKT). Residues 584–775 (VGSEEIARVT…LIVMTSNVGS (192 aa)) form an II region.

The protein belongs to the ClpA/ClpB family. ClpD subfamily. In terms of tissue distribution, highly expressed in stems, culms and leaves.

The protein localises to the plastid. The protein resides in the chloroplast. Molecular chaperone that may interact with a ClpP-like protease involved in degradation of denatured proteins in the chloroplast. This Oryza sativa subsp. japonica (Rice) protein is Chaperone protein ClpD2, chloroplastic (CLPD2).